Reading from the N-terminus, the 469-residue chain is tRNA(Ile)-lysidine synthase (469 aa).

26-31 (SGGPDS) lines the ATP pocket.

This sequence belongs to the tRNA(Ile)-lysidine synthase family.

Its subcellular location is the cytoplasm. It carries out the reaction cytidine(34) in tRNA(Ile2) + L-lysine + ATP = lysidine(34) in tRNA(Ile2) + AMP + diphosphate + H(+). Functionally, ligates lysine onto the cytidine present at position 34 of the AUA codon-specific tRNA(Ile) that contains the anticodon CAU, in an ATP-dependent manner. Cytidine is converted to lysidine, thus changing the amino acid specificity of the tRNA from methionine to isoleucine. This is tRNA(Ile)-lysidine synthase from Clostridium perfringens (strain ATCC 13124 / DSM 756 / JCM 1290 / NCIMB 6125 / NCTC 8237 / Type A).